A 378-amino-acid chain; its full sequence is Flap endonuclease 1 (378 aa).

The segment at 1 to 102 (MGIHGLAKLI…GELAKRSERR (102 aa)) is N-domain. Arg-19 bears the Symmetric dimethylarginine; by PRMT5 mark. Asp-34 serves as a coordination point for Mg(2+). DNA contacts are provided by Arg-47 and Arg-69. Lys-78 is modified (N6-acetyllysine). Asp-84 is a binding site for Mg(2+). Arg-98 and Arg-102 each carry symmetric dimethylarginine; by PRMT5. Positions 120–251 (EVEKFTKRLV…KRAVDLIQKH (132 aa)) are I-domain. Residues Glu-156, Glu-158, Asp-177, and Asp-179 each contribute to the Mg(2+) site. Residue Glu-156 coordinates DNA. Ser-185 carries the post-translational modification Phosphoserine; by CDK2. Position 190 is a symmetric dimethylarginine; by PRMT5 (Arg-190). Position 195 is a phosphoserine (Ser-195). Gly-229 and Asp-231 together coordinate DNA. Asp-231 is a binding site for Mg(2+). Residues Ser-253, Ser-291, and Ser-333 each carry the phosphoserine modification. A disordered region spans residues 325–378 (RLSKSRQGSTQGRLDDFFKVTGSLSSAKRKEPEPKGPAKKKAKTGGAGKFRRGK). A Phosphothreonine modification is found at Thr-334. Positions 334 to 342 (TQGRLDDFF) are interaction with PCNA. 3 positions are modified to N6-acetyllysine: Lys-352, Lys-373, and Lys-378. A compositionally biased stretch (basic residues) spans 361 to 378 (PAKKKAKTGGAGKFRRGK).

Belongs to the XPG/RAD2 endonuclease family. FEN1 subfamily. Interacts with PCNA. Three molecules of FEN1 bind to one PCNA trimer with each molecule binding to one PCNA monomer. PCNA stimulates the nuclease activity without altering cleavage specificity. The C-terminal domain binds EP300; can bind simultaneously to both PCNA and EP300. Interacts with DDX11; this interaction is direct and increases flap endonuclease activity of FEN1. Interacts with WDR4; regulating its endonuclease activity. Interacts with POLB. The cofactor is Mg(2+). Post-translationally, acetylated by EP300. Acetylation inhibits both endonuclease and exonuclease activity. Acetylation also reduces DNA-binding activity but does not affect interaction with PCNA or EP300. Phosphorylation upon DNA damage induces relocalization to the nuclear plasma. Phosphorylation at Ser-185 by CDK2 occurs during late S-phase and results in dissociation from PCNA. In terms of processing, methylation at Arg-190 by PRMT5 impedes Ser-185 phosphorylation and increases interaction with PCNA.

Its subcellular location is the nucleus. The protein resides in the nucleolus. It is found in the nucleoplasm. The protein localises to the mitochondrion. Structure-specific nuclease with 5'-flap endonuclease and 5'-3' exonuclease activities involved in DNA replication and repair. During DNA replication, cleaves the 5'-overhanging flap structure that is generated by displacement synthesis when DNA polymerase encounters the 5'-end of a downstream Okazaki fragment. It enters the flap from the 5'-end and then tracks to cleave the flap base, leaving a nick for ligation. Also involved in the long patch base excision repair (LP-BER) pathway, by cleaving within the apurinic/apyrimidinic (AP) site-terminated flap. Acts as a genome stabilization factor that prevents flaps from equilibrating into structures that lead to duplications and deletions. Also possesses 5'-3' exonuclease activity on nicked or gapped double-stranded DNA, and exhibits RNase H activity. Also involved in replication and repair of rDNA and in repairing mitochondrial DNA. The sequence is that of Flap endonuclease 1 from Mus musculus (Mouse).